The sequence spans 142 residues: Hemoglobin subunit alpha (142 aa).

Residues 2–142 (VLSAADKTNV…VSTVLTSKYR (141 aa)) enclose the Globin domain. The residue at position 4 (Ser4) is a Phosphoserine. The residue at position 8 (Lys8) is an N6-succinyllysine. The residue at position 9 (Thr9) is a Phosphothreonine. N6-succinyllysine is present on Lys12. At Lys17 the chain carries N6-acetyllysine; alternate. N6-succinyllysine; alternate is present on Lys17. At Lys41 the chain carries N6-succinyllysine. Ser50 bears the Phosphoserine mark. His59 lines the O2 pocket. Heme b is bound at residue His88. Ser103 bears the Phosphoserine mark. Thr109 is subject to Phosphothreonine. Ser125 carries the post-translational modification Phosphoserine. Phosphothreonine occurs at positions 135 and 138. Ser139 carries the phosphoserine modification.

Belongs to the globin family. In terms of assembly, heterotetramer of two alpha chains and two beta chains. Red blood cells.

Involved in oxygen transport from the lung to the various peripheral tissues. Its function is as follows. Hemopressin acts as an antagonist peptide of the cannabinoid receptor CNR1. Hemopressin-binding efficiently blocks cannabinoid receptor CNR1 and subsequent signaling. In Equus zebra (Mountain zebra), this protein is Hemoglobin subunit alpha (HBA).